Consider the following 452-residue polypeptide: tRNA modification GTPase MnmE (452 aa).

R21, E78, and K118 together coordinate (6S)-5-formyl-5,6,7,8-tetrahydrofolate. One can recognise a TrmE-type G domain in the interval 214-375 (GMKVVIAGRP…LREHLKQSMG (162 aa)). N224 contacts K(+). Residues 224 to 229 (NAGKSS), 243 to 249 (TDIAGTT), and 268 to 271 (DTAG) contribute to the GTP site. S228 is a Mg(2+) binding site. The K(+) site is built by T243, I245, and T248. T249 serves as a coordination point for Mg(2+). K452 is a (6S)-5-formyl-5,6,7,8-tetrahydrofolate binding site.

The protein belongs to the TRAFAC class TrmE-Era-EngA-EngB-Septin-like GTPase superfamily. TrmE GTPase family. In terms of assembly, homodimer. Heterotetramer of two MnmE and two MnmG subunits. Requires K(+) as cofactor.

Its subcellular location is the cytoplasm. Its function is as follows. Exhibits a very high intrinsic GTPase hydrolysis rate. Involved in the addition of a carboxymethylaminomethyl (cmnm) group at the wobble position (U34) of certain tRNAs, forming tRNA-cmnm(5)s(2)U34. This Actinobacillus succinogenes (strain ATCC 55618 / DSM 22257 / CCUG 43843 / 130Z) protein is tRNA modification GTPase MnmE.